A 194-amino-acid polypeptide reads, in one-letter code: Transmembrane protein 212 (194 aa).

A run of 5 helical transmembrane segments spans residues 11–31 (ILVTLGILSVCSGVIAFFPVF), 44–64 (IACPIWNGALAITTGVLLLLA), 76–96 (ATFTFVILSIMGCPLHFAIAL), 99–119 (ALLGPYCFYSFSGIAGTNYLG), and 148–168 (LQALDLCLSFTLLCTSLTVFI).

Its subcellular location is the membrane. This is Transmembrane protein 212 (TMEM212) from Homo sapiens (Human).